Reading from the N-terminus, the 521-residue chain is Amidase 1 (521 aa).

Catalysis depends on charge relay system residues lysine 112 and serine 187. Substrate is bound by residues serine 187 and 208 to 211 (IGGS). Catalysis depends on serine 211, which acts as the Acyl-ester intermediate.

The protein belongs to the amidase family.

The enzyme catalyses a monocarboxylic acid amide + H2O = a monocarboxylate + NH4(+). The protein operates within xenobiotic degradation. Its function is as follows. Amidase; part of the Fusarium detoxification of benzoxazolinone cluster 1 (FDB1) involved in the degradation of benzoxazolinones produced by the host plant. Maize, wheat, and rye produce the 2 benzoxazinone phytoanticipins 2,4-dihy-droxy-7-methoxy-1,4-benzoxazin-3-one (DIMBOA) and 2,4-dihydroxy-1,4-benzoxazin-3-one (DIBOA) that, due to their inherent instability once released, spontaneously degrade to the more stable corresponding benzoxazolinones, 6-methoxy-2-benzoxazolinone (MBOA) and 2-benzoxazolinone (BOA), respectively. The first step in the detoxification of benzoxazolinones involves the hydrolysis of the cyclic ester bond of benzoxazolinones by the FDB1 cluster gamma-lactamase MBL1 to aminophenols. MBL1 is able to convert BOA into 2-aminophenol (2-AP), as well as MBOA into 5-methoxy-2-aminophenol (2-AMP). The FDB2 cluster N-malonyltransferase FDB2/NAT1 then metabolizes aminophenols via N-malonylation to non-toxic malonamic acids. FDB2/NAT1 converts 2-AP into N-(2-hydroxyphenyl) malonamic acid (HPMA) and 2-AMP into N-(2-hydroxy-4-methoxyphenyl) malonamic acid (HMPMA). The duplicated dienlactone hydrolases DLH1 and DLH2 may provide redundant function for hydrolyzing the lactone moiety in the BOA molecule. The roles of the amidases an other enzymes encoded by the 2 FDB clusters have not been identified so far. The polypeptide is Amidase 1 (Gibberella moniliformis (strain M3125 / FGSC 7600) (Maize ear and stalk rot fungus)).